We begin with the raw amino-acid sequence, 21 residues long: Snake venom serine protease jerdonase (21 aa).

In terms of domain architecture, Peptidase S1 spans 1-21 (IIGGDECNINEHPFLVALYDA).

The protein belongs to the peptidase S1 family. Snake venom subfamily. Monomer. Glycosylated; contains 35.8% neutral carbohydrate. Expressed by the venom gland.

Its subcellular location is the secreted. With respect to regulation, inhibited by PMSF and soybean trypsin inhibitor. Partially inhibited by L-cysteine and DTT. Not affected by EDTA. Functionally, multifunctional venom serine protease that has fibrino(geno)lytic activity towards the A alpha-chain of human fibrinogen (FGA) and a slow activity towards the B beta-chain (FGB). Also hydrolyzes bovine low-molecular-mass kininogen and releases bradykinin. Catalyzes the hydrolysis of BAEE, S-2238 and S-2302. This chain is Snake venom serine protease jerdonase, found in Protobothrops jerdonii (Jerdon's pitviper).